Consider the following 3080-residue polypeptide: Protein PIEZO homolog (3080 aa).

6 consecutive transmembrane segments (helical) span residues 28-48 (YIYF…SLIL), 57-77 (PIIT…VNVV), 86-106 (LSVN…WIVF), 113-133 (VIVF…LVYP), 204-224 (YPSI…LLLA), and 232-252 (VMLK…LFVY). Asn276 carries an N-linked (GlcNAc...) asparagine glycan. Residues 285–305 (WPLVIGYITVLLLYISTCILF) traverse the membrane as a helical segment. 2 N-linked (GlcNAc...) asparagine glycosylation sites follow: Asn312 and Asn339. 2 consecutive transmembrane segments (helical) span residues 362–382 (ILVV…LASG) and 396–416 (VIYI…IFNI). Residue Asn434 is glycosylated (N-linked (GlcNAc...) asparagine). Residues 438 to 458 (WLYIGVQIVVSLTLSLYCFYS) traverse the membrane as a helical segment. Residues 469 to 548 (KKDQQSQQSQ…GGGIIRPRKP (80 aa)) form a disordered region. The segment covering 473–505 (QSQQSQPQPQQQQQQQQSSQNNQIQQSPLQYQQ) has biased composition (low complexity). Residues 512–532 (ISNKSLPSSPMSTKSTTVHIQ) show a composition bias toward polar residues. Asn514, Asn567, and Asn606 each carry an N-linked (GlcNAc...) asparagine glycan. Transmembrane regions (helical) follow at residues 672-692 (GLTS…VFVI), 700-720 (FWMC…IWQL), and 740-760 (YGSP…FSII). Asn795 carries N-linked (GlcNAc...) asparagine glycosylation. A run of 3 helical transmembrane segments spans residues 827 to 847 (FCYL…INIV), 849 to 869 (MATV…SIHI), and 872 to 892 (FWII…IMQF). A glycan (N-linked (GlcNAc...) asparagine) is linked at Asn918. The helical transmembrane segment at 928–948 (LFGCSSILVVCVFQLTVFFSI) threads the bilayer. A glycan (N-linked (GlcNAc...) asparagine) is linked at Asn992. 2 helical membrane-spanning segments follow: residues 1036–1056 (FAIS…MIVI) and 1067–1087 (IGSF…AALL). N-linked (GlcNAc...) asparagine glycosylation occurs at Asn1109. The interval 1158-1185 (QQQRKLEEHEEEYEEEEDQFGNKKNNDK) is disordered. Residues 1166–1176 (HEEEYEEEEDQ) are compositionally biased toward acidic residues. N-linked (GlcNAc...) asparagine glycans are attached at residues Asn1191, Asn1240, and Asn1251. A disordered region spans residues 1199 to 1253 (DDGNNNNNNNNNNNNNNNNNNNNNNNNNNNNNNNNNNNNNNNQSNNENNENNNNS). The segment covering 1202-1252 (NNNNNNNNNNNNNNNNNNNNNNNNNNNNNNNNNNNNNNNQSNNENNENNNN) has biased composition (low complexity). 3 helical membrane passes run 1281–1301 (VLAF…LIII), 1316–1336 (IYVS…ILVV), and 1360–1380 (LLLL…VLFF). Residues Asn1424 and Asn1440 are each glycosylated (N-linked (GlcNAc...) asparagine). Helical transmembrane passes span 1472 to 1492 (VILI…SCFY) and 1519 to 1539 (IYNW…ILYF). N-linked (GlcNAc...) asparagine glycosylation is found at Asn1559 and Asn1589. A helical transmembrane segment spans residues 1619-1639 (IETGPLSISTISDVIIMVLLA). Basic residues predominate over residues 1704–1714 (RINRRKNRHNH). The tract at residues 1704–1812 (RINRRKNRHN…NPLSNSSSTV (109 aa)) is disordered. Residues 1715-1742 (YYNNNPNNNYNNNNNNNNSNSSNSNNNN) show a composition bias toward low complexity. N-linked (GlcNAc...) asparagine glycans are attached at residues Asn1731, Asn1734, Asn1763, Asn1768, Asn1771, Asn1779, Asn1807, and Asn1864. Polar residues predominate over residues 1762 to 1782 (KNTTNQNATNSTYSPFANSTM). Over residues 1789-1812 (NNNNNNNNNNNFNNNPLSNSSSTV) the composition is skewed to low complexity. Disordered stretches follow at residues 1873 to 1899 (LQQE…SSKE) and 1958 to 2032 (SQLL…TSSS). Over residues 1958–2021 (SQLLQQQQQQ…NNNNNNNNNN (64 aa)) the composition is skewed to low complexity. Residue Asn2027 is glycosylated (N-linked (GlcNAc...) asparagine). Transmembrane regions (helical) follow at residues 2078 to 2098 (IANG…AVFL) and 2112 to 2132 (FWRF…VFQI). An N-linked (GlcNAc...) asparagine glycan is attached at Asn2148. Residues 2199 to 2219 (VFGLYIIDGHFISGAFWDLAI) traverse the membrane as a helical segment. Positions 2277-2367 (LNNSPISLNS…NNNNNNNNNN (91 aa)) are disordered. Residue Asn2285 is glycosylated (N-linked (GlcNAc...) asparagine). Residues 2288–2367 (NNNNNNNNNN…NNNNNNNNNN (80 aa)) are compositionally biased toward low complexity. 2 helical membrane passes run 2427–2447 (IIIY…WLAI) and 2457–2477 (YYMP…IFPQ). Asn2478 carries an N-linked (GlcNAc...) asparagine glycan. The next 4 membrane-spanning stretches (helical) occupy residues 2500–2520 (YIVI…IYLY), 2530–2550 (QIVL…DLIV), 2553–2573 (FSFG…IYLY), and 2671–2691 (FVTG…PLII). 9 N-linked (GlcNAc...) asparagine glycosylation sites follow: Asn2762, Asn2790, Asn2837, Asn2840, Asn2848, Asn2858, Asn2908, Asn2913, and Asn2935. The segment at 2835–2863 (QSNNSNNSNNPNENSSSGSDDNNNNSNNN) is disordered. Residues 2836–2863 (SNNSNNSNNPNENSSSGSDDNNNNSNNN) are compositionally biased toward low complexity. Residues 2955-2975 (ITSTLVSAGIIGLYVSVVLSV) form a helical membrane-spanning segment. A disordered region spans residues 3054–3080 (PTINSTLNNQNNQNNNNNNNNNHEKIN). Asn3057 is a glycosylation site (N-linked (GlcNAc...) asparagine). Positions 3061 to 3074 (NNQNNQNNNNNNNN) are enriched in low complexity.

It belongs to the PIEZO (TC 1.A.75) family.

It localises to the membrane. The chain is Protein PIEZO homolog from Dictyostelium discoideum (Social amoeba).